The chain runs to 648 residues: Leucine-rich repeat and WD repeat-containing protein 1 (648 aa).

4 LRR repeats span residues 22–43 (KIQSLNLSGLQLLSEHLDPNLL), 48–69 (KLRELDLSNNLLETLPANLGLS), 70–91 (HLRILRCTNNQLGDVTALHQFP), and 92–113 (ELEELNLEGNPFLTVSDNLKVS). The tract at residues 214–262 (VEHPQAAGASKFRAREVASKRPGKDPVTLPPSKRVRALPPAQAEGSPMG) is disordered. Residues 226 to 237 (RAREVASKRPGK) are compositionally biased toward basic and acidic residues. A Phosphoserine modification is found at Ser259. 5 WD repeats span residues 392-432 (AHKK…QDYK), 443-482 (CGSVPLRLCPVATCPDDFLLAGCEGGCYCWDVRLDQPQKQ), 497-536 (VSGQRVDGLAFVNEDVVASKGSGQGTIYLWSWSQTWAGRG), 541-592 (LPVV…KEPP), and 616-648 (VTKTMINTVVANAAFTYLTALTDSNIVSIWRRC).

It belongs to the LRWD1 family. In terms of assembly, integral component of the ORC complex. Directly interacts with CDT1, GMNN and ORC2. Interacts with ORC2 only when non-ubiquitinated; this interaction prevents LRWD1 ubiquitination and degradation. Some of these interactions are regulated in a cell-cycle dependent manner. Interaction with ORC1 occurs predominantly during G1. Association with phosphorylated ORC1 during mitosis is not efficient. Interaction with CDT1 occurs during G1 phase, as well as during mitosis with phosphorylated CDT1. Interaction with GMNN occurs from G1/S to mitosis. Interaction with ORC2 is observed throughout the cell cycle. The stoichiometry of the ORCA/ORC/CDT1/GMNN complex is 1:1:1:2. Interacts with CUL4A and DDB1; this interaction may lead to ubiquitination. Post-translationally, ubiquitinated; undergoes 'Lys-48'-linked polyubiquitination leading to proteasomal degradation. Ubiquitination occurs within the WD repeats at the end of the G1 phase. Ubiquitination may be catalyzed by the CUL4-DDB1 E3 ubiquitin-protein ligase complex and other E3 ligases. In terms of tissue distribution, testis-specific.

The protein localises to the nucleus. Its subcellular location is the chromosome. It localises to the centromere. The protein resides in the telomere. It is found in the cytoplasm. The protein localises to the cytoskeleton. Its subcellular location is the microtubule organizing center. It localises to the centrosome. The protein resides in the kinetochore. Functionally, required for G1/S transition. Recruits and stabilizes the origin recognition complex (ORC) onto chromatin during G1 to establish pre-replication complex (preRC) and to heterochromatic sites in post-replicated cells. Binds a combination of DNA and histone methylation repressive marks on heterochromatin. Binds histone H3 and H4 trimethylation marks H3K9me3, H3K27me3 and H4K20me3 in a cooperative manner with DNA methylation. Required for silencing of major satellite repeats. May be important ORC2, ORC3 and ORC4 stability. This chain is Leucine-rich repeat and WD repeat-containing protein 1 (LRWD1), found in Mus musculus (Mouse).